A 714-amino-acid chain; its full sequence is Polyribonucleotide nucleotidyltransferase (714 aa).

2 residues coordinate Mg(2+): D488 and D494. A KH domain is found at 555-614 (PRIEVMNIPVDKIREVIGSGGKVIREIVEKTGAKINIDDDGTVKIASASGKEIEAARKWI). Residues 624–692 (GQVYEGTVVK…ERGKVRLSMK (69 aa)) enclose the S1 motif domain.

This sequence belongs to the polyribonucleotide nucleotidyltransferase family. Requires Mg(2+) as cofactor.

The protein resides in the cytoplasm. The catalysed reaction is RNA(n+1) + phosphate = RNA(n) + a ribonucleoside 5'-diphosphate. Functionally, involved in mRNA degradation. Catalyzes the phosphorolysis of single-stranded polyribonucleotides processively in the 3'- to 5'-direction. The protein is Polyribonucleotide nucleotidyltransferase of Sinorhizobium medicae (strain WSM419) (Ensifer medicae).